The sequence spans 207 residues: Holliday junction branch migration complex subunit RuvA (207 aa).

Residues 1 to 63 (MIGMLKGRVE…QDAITLFGFL (63 aa)) form a domain I region. Residues 64 to 142 (DARSKRMFLQ…VDKIETGEPT (79 aa)) are domain II. The flexible linker stretch occupies residues 143–153 (STQRIPTDKGV). The interval 153 to 207 (VEQVVEGLMSLGWKQADAQQAVDSVISSSGIALPLEEGNVPTVLRLALTSLDRGR) is domain III.

The protein belongs to the RuvA family. Homotetramer. Forms an RuvA(8)-RuvB(12)-Holliday junction (HJ) complex. HJ DNA is sandwiched between 2 RuvA tetramers; dsDNA enters through RuvA and exits via RuvB. An RuvB hexamer assembles on each DNA strand where it exits the tetramer. Each RuvB hexamer is contacted by two RuvA subunits (via domain III) on 2 adjacent RuvB subunits; this complex drives branch migration. In the full resolvosome a probable DNA-RuvA(4)-RuvB(12)-RuvC(2) complex forms which resolves the HJ.

The protein resides in the cytoplasm. Functionally, the RuvA-RuvB-RuvC complex processes Holliday junction (HJ) DNA during genetic recombination and DNA repair, while the RuvA-RuvB complex plays an important role in the rescue of blocked DNA replication forks via replication fork reversal (RFR). RuvA specifically binds to HJ cruciform DNA, conferring on it an open structure. The RuvB hexamer acts as an ATP-dependent pump, pulling dsDNA into and through the RuvAB complex. HJ branch migration allows RuvC to scan DNA until it finds its consensus sequence, where it cleaves and resolves the cruciform DNA. This is Holliday junction branch migration complex subunit RuvA from Bifidobacterium animalis subsp. lactis (strain AD011).